Consider the following 376-residue polypeptide: c-di-GMP synthase (376 aa).

The protein belongs to the CD-NTase family. G05 subfamily.

It carries out the reaction 2 GTP = 3',3'-c-di-GMP + 2 diphosphate. Functionally, cyclic nucleotide synthase (second messenger synthase) of a CBASS antivirus system. CBASS (cyclic oligonucleotide-based antiphage signaling system) provides immunity against bacteriophage. The CD-NTase protein synthesizes cyclic nucleotides in response to infection; these serve as specific second messenger signals. The signals activate a diverse range of effectors, leading to bacterial cell death and thus abortive phage infection. A type I-D CBASS(GG) system. Its function is as follows. Cyclic dinucleotide synthase that catalyzes the synthesis of c-di-GMP, has no activity with other NTP substrates. The sequence is that of c-di-GMP synthase from Roseivirga ehrenbergii (strain DSM 102268 / JCM 13514 / KCTC 12282 / NCIMB 14502 / KMM 6017).